The primary structure comprises 311 residues: Olfactory receptor 52J3 (311 aa).

Topologically, residues 1-27 (MFYHNKSIFHPVTFFLIGIPGLEDFHM) are extracellular. Asparagine 5 carries an N-linked (GlcNAc...) asparagine glycan. A helical membrane pass occupies residues 28 to 48 (WISGPFCSVYLVALLGNATIL). Residues 49-56 (LVIKVEQT) are Cytoplasmic-facing. A helical membrane pass occupies residues 57-77 (LREPMFYFLAILSTIDLALST). The Extracellular portion of the chain corresponds to 78–101 (TSVPRMLGIFWFDAHEINYGACVA). Cysteine 99 and cysteine 191 are disulfide-bonded. A helical transmembrane segment spans residues 102 to 122 (QMFLIHAFTGMEAEVLLAMAF). Over 123 to 141 (DRYVAVCAPLHYATILTSQ) the chain is Cytoplasmic. The helical transmembrane segment at 142 to 162 (VLVGISMCIVIRPVLLTLPMV) threads the bilayer. At 163 to 198 (YLIYRLPFCQAHIIAHSYCEHMGIAKLSCGNIRING) the chain is on the extracellular side. The helical transmembrane segment at 199-218 (IYGLFVVSFFVLNLVLIGIS) threads the bilayer. The Cytoplasmic segment spans residues 219–238 (YVYILRAVFRLPSHDAQLKA). Residues 239–259 (LSTCGAHVGVICVFYIPSVFS) form a helical membrane-spanning segment. The Extracellular segment spans residues 260–274 (FLTHRFGHQIPGYIH). A helical membrane pass occupies residues 275-295 (ILVANLYLIIPPSLNPIIYGV). Residues 296–311 (RTKQIRERVLYVFTKK) lie on the Cytoplasmic side of the membrane.

It belongs to the G-protein coupled receptor 1 family.

The protein resides in the cell membrane. Its function is as follows. Odorant receptor. This chain is Olfactory receptor 52J3 (OR52J3), found in Homo sapiens (Human).